A 376-amino-acid chain; its full sequence is Glutamate 5-kinase (376 aa).

Lys17 lines the ATP pocket. Residues Ser56, Asp144, and Asn156 each coordinate substrate. ATP is bound by residues 176–177 and 218–224; these read TD and TGGMQSK. The PUA domain occupies 283–359; that stretch reads KGTLLLDAGA…QSREIASVLK (77 aa).

This sequence belongs to the glutamate 5-kinase family.

It localises to the cytoplasm. The catalysed reaction is L-glutamate + ATP = L-glutamyl 5-phosphate + ADP. The protein operates within amino-acid biosynthesis; L-proline biosynthesis; L-glutamate 5-semialdehyde from L-glutamate: step 1/2. In terms of biological role, catalyzes the transfer of a phosphate group to glutamate to form L-glutamate 5-phosphate. In Desulfotalea psychrophila (strain LSv54 / DSM 12343), this protein is Glutamate 5-kinase.